An 830-amino-acid polypeptide reads, in one-letter code: Leucine--tRNA ligase (830 aa).

The short motif at 42–52 (PYPSGNLHMGH) is the 'HIGH' region element. Residues 585–589 (KMSKS) carry the 'KMSKS' region motif. Lys-588 is a binding site for ATP.

Belongs to the class-I aminoacyl-tRNA synthetase family.

Its subcellular location is the cytoplasm. It catalyses the reaction tRNA(Leu) + L-leucine + ATP = L-leucyl-tRNA(Leu) + AMP + diphosphate. This Halothermothrix orenii (strain H 168 / OCM 544 / DSM 9562) protein is Leucine--tRNA ligase.